The following is a 318-amino-acid chain: Cephalosporin-C deacetylase (318 aa).

Tyrosine 91 contributes to the substrate binding site. Catalysis depends on serine 181, which acts as the Nucleophile. Active-site charge relay system residues include aspartate 269 and histidine 298.

It belongs to the carbohydrate esterase 7 family. As to quaternary structure, homohexamer.

Its subcellular location is the cytoplasm. The catalysed reaction is Deacetylation of xylans and xylo-oligosaccharides.. The enzyme catalyses cephalosporin C + H2O = deacetylcephalosporin C + acetate + H(+). Its function is as follows. Esterase that removed acetyl groups from a number of O-acetylated small substrates, such as acetylated xylose, short xylooligosaccharides and cephalosporin C. Has no activity towards polymeric acetylated xylan. Cannot cleave amide linkages. This Bacillus subtilis (strain 168) protein is Cephalosporin-C deacetylase (cah).